An 80-amino-acid polypeptide reads, in one-letter code: Large ribosomal subunit protein uL29 (80 aa).

It belongs to the universal ribosomal protein uL29 family.

This is Large ribosomal subunit protein uL29 from Saccharopolyspora erythraea (strain ATCC 11635 / DSM 40517 / JCM 4748 / NBRC 13426 / NCIMB 8594 / NRRL 2338).